The primary structure comprises 303 residues: Protein-lysine N-methyltransferase rrg1 (303 aa).

S-adenosyl-L-methionine-binding positions include W117, G143 to G145, D165, W198, and S221.

Belongs to the class I-like SAM-binding methyltransferase superfamily. METTL21 family.

It is found in the cytoplasm. The protein resides in the nucleus. Its function is as follows. S-adenosyl-L-methionine-dependent protein-lysine N-methyltransferase that methylates elongation factor 2 and elongation factor 3A. This Schizosaccharomyces pombe (strain 972 / ATCC 24843) (Fission yeast) protein is Protein-lysine N-methyltransferase rrg1.